The sequence spans 584 residues: Arginine--tRNA ligase (584 aa).

The 'HIGH' region signature appears at 127–137 (PNLAKEMHVGH).

It belongs to the class-I aminoacyl-tRNA synthetase family. As to quaternary structure, monomer.

The protein localises to the cytoplasm. It catalyses the reaction tRNA(Arg) + L-arginine + ATP = L-arginyl-tRNA(Arg) + AMP + diphosphate. This Alcanivorax borkumensis (strain ATCC 700651 / DSM 11573 / NCIMB 13689 / SK2) protein is Arginine--tRNA ligase.